A 180-amino-acid polypeptide reads, in one-letter code: NADH-quinone oxidoreductase subunit I (180 aa).

2 consecutive 4Fe-4S ferredoxin-type domains span residues 50 to 80 (LTRD…LQKA) and 90 to 119 (EFFR…MTPD). Positions 60, 63, 66, 70, 99, 102, 105, and 109 each coordinate [4Fe-4S] cluster.

Belongs to the complex I 23 kDa subunit family. In terms of assembly, NDH-1 is composed of 14 different subunits. Subunits NuoA, H, J, K, L, M, N constitute the membrane sector of the complex. It depends on [4Fe-4S] cluster as a cofactor.

The protein localises to the cell inner membrane. It carries out the reaction a quinone + NADH + 5 H(+)(in) = a quinol + NAD(+) + 4 H(+)(out). Functionally, NDH-1 shuttles electrons from NADH, via FMN and iron-sulfur (Fe-S) centers, to quinones in the respiratory chain. The immediate electron acceptor for the enzyme in this species is believed to be ubiquinone. Couples the redox reaction to proton translocation (for every two electrons transferred, four hydrogen ions are translocated across the cytoplasmic membrane), and thus conserves the redox energy in a proton gradient. In Acinetobacter baylyi (strain ATCC 33305 / BD413 / ADP1), this protein is NADH-quinone oxidoreductase subunit I.